Reading from the N-terminus, the 175-residue chain is NADH-ubiquinone oxidoreductase chain 6 (175 aa).

The next 5 helical transmembrane spans lie at 1–21, 25–45, 47–67, 88–108, and 149–169; these read MMTY…VGFS, SPIY…GIVL, FGGS…MLVV, AVLG…CYIL, and YGTW…LVIM.

The protein belongs to the complex I subunit 6 family. In terms of assembly, core subunit of respiratory chain NADH dehydrogenase (Complex I) which is composed of 45 different subunits.

The protein resides in the mitochondrion inner membrane. It carries out the reaction a ubiquinone + NADH + 5 H(+)(in) = a ubiquinol + NAD(+) + 4 H(+)(out). In terms of biological role, core subunit of the mitochondrial membrane respiratory chain NADH dehydrogenase (Complex I) which catalyzes electron transfer from NADH through the respiratory chain, using ubiquinone as an electron acceptor. Essential for the catalytic activity and assembly of complex I. This Halichoerus grypus (Gray seal) protein is NADH-ubiquinone oxidoreductase chain 6 (MT-ND6).